Here is a 320-residue protein sequence, read N- to C-terminus: Putative FBD-associated F-box protein At3g60710 (320 aa).

Residues 2-48 enclose the F-box domain; that stretch reads EDLISQLPNELLQEILLNLPTSESVRTSVLPTRWRNLWQSVPGLYLI. The 57-residue stretch at 212–268 folds into the FBD domain; sequence MEEIASSPVPKCLQTSIENVKIKMTPKADQEKSRKAETEVANYILENATLLKLTLWL.

This Arabidopsis thaliana (Mouse-ear cress) protein is Putative FBD-associated F-box protein At3g60710.